Consider the following 321-residue polypeptide: Meiotic drive suppressor wtf26 (321 aa).

Positions Gly-29–Asp-68 are disordered. The next 6 membrane-spanning stretches (helical) occupy residues Phe-73–Cys-93, Trp-110–Phe-130, Glu-151–Val-171, Thr-188–Trp-208, Ala-210–Gly-230, and Gly-243–Met-263.

The protein belongs to the WTF family. Homomer. Interacts with other proteins that exhibit high sequence similarity.

Its subcellular location is the spore membrane. It is found in the vacuole membrane. Acts as a suppressor component of the dual wtf meiotic drive system, and can suppress but not confer meiotic drive by compatible poisons. Wtf meiotic drive systems promote unequal transmission of alleles from the parental zygote to progeny spores by encoding a poison and an antidote from the same locus; the poison is trans-acting and forms toxic aggregates in all spores within an ascus, wherease the antidote is spore-specific and targets aggregates for degradation by the vacuole. Meiotic drive by wtf systems therefore lead to poisoning of all progeny that do not inherit the dual poison/antidote allele, or express a compatible antidote. This is Meiotic drive suppressor wtf26 from Schizosaccharomyces kambucha (Fission yeast).